Reading from the N-terminus, the 85-residue chain is Large ribosomal subunit protein bL27 (85 aa).

Residues 1-22 form a disordered region; it reads MAHKKGQGSSRNGRDSPGQRRG.

Belongs to the bacterial ribosomal protein bL27 family.

The sequence is that of Large ribosomal subunit protein bL27 from Anaeromyxobacter dehalogenans (strain 2CP-1 / ATCC BAA-258).